Here is a 246-residue protein sequence, read N- to C-terminus: Putative KilA-N domain-containing protein L33 (246 aa).

Residues 20-129 (RYTKCQYCDI…AKVSLWIEEW (110 aa)) form the KilA-N domain.

This chain is Putative KilA-N domain-containing protein L33, found in Acanthamoeba polyphaga mimivirus (APMV).